Consider the following 459-residue polypeptide: Argininosuccinate lyase (459 aa).

This sequence belongs to the lyase 1 family. Argininosuccinate lyase subfamily.

Its subcellular location is the cytoplasm. The catalysed reaction is 2-(N(omega)-L-arginino)succinate = fumarate + L-arginine. It functions in the pathway amino-acid biosynthesis; L-arginine biosynthesis; L-arginine from L-ornithine and carbamoyl phosphate: step 3/3. The polypeptide is Argininosuccinate lyase (Staphylococcus aureus (strain Mu3 / ATCC 700698)).